The primary structure comprises 80 residues: Defensin-like protein 16 (80 aa).

Positions 1–29 (MAKFASIITLIFAALVLFAAFDAPAMVEA) are cleaved as a signal peptide. Q30 carries the post-translational modification Pyrrolidone carboxylic acid. 4 disulfide bridges follow: C33-C80, C44-C65, C50-C74, and C54-C76.

The protein belongs to the DEFL family. In terms of tissue distribution, predominantly expressed in leaves.

It is found in the secreted. Its function is as follows. Confers broad-spectrum resistance to pathogens. Has antifungal activity in vitro. The chain is Defensin-like protein 16 (PDF1.2A) from Arabidopsis thaliana (Mouse-ear cress).